We begin with the raw amino-acid sequence, 288 residues long: 4-hydroxy-3-methylbut-2-enyl diphosphate reductase (288 aa).

C12 is a binding site for [4Fe-4S] cluster. (2E)-4-hydroxy-3-methylbut-2-enyl diphosphate is bound by residues H42 and H77. Dimethylallyl diphosphate-binding residues include H42 and H77. H42 and H77 together coordinate isopentenyl diphosphate. C99 contributes to the [4Fe-4S] cluster binding site. H127 serves as a coordination point for (2E)-4-hydroxy-3-methylbut-2-enyl diphosphate. H127 serves as a coordination point for dimethylallyl diphosphate. H127 contacts isopentenyl diphosphate. E129 serves as the catalytic Proton donor. A (2E)-4-hydroxy-3-methylbut-2-enyl diphosphate-binding site is contributed by T165. Residue C193 coordinates [4Fe-4S] cluster. S221, S222, N223, and S265 together coordinate (2E)-4-hydroxy-3-methylbut-2-enyl diphosphate. Residues S221, S222, N223, and S265 each contribute to the dimethylallyl diphosphate site. Isopentenyl diphosphate contacts are provided by S221, S222, N223, and S265.

It belongs to the IspH family. Requires [4Fe-4S] cluster as cofactor.

The enzyme catalyses isopentenyl diphosphate + 2 oxidized [2Fe-2S]-[ferredoxin] + H2O = (2E)-4-hydroxy-3-methylbut-2-enyl diphosphate + 2 reduced [2Fe-2S]-[ferredoxin] + 2 H(+). It catalyses the reaction dimethylallyl diphosphate + 2 oxidized [2Fe-2S]-[ferredoxin] + H2O = (2E)-4-hydroxy-3-methylbut-2-enyl diphosphate + 2 reduced [2Fe-2S]-[ferredoxin] + 2 H(+). It functions in the pathway isoprenoid biosynthesis; dimethylallyl diphosphate biosynthesis; dimethylallyl diphosphate from (2E)-4-hydroxy-3-methylbutenyl diphosphate: step 1/1. It participates in isoprenoid biosynthesis; isopentenyl diphosphate biosynthesis via DXP pathway; isopentenyl diphosphate from 1-deoxy-D-xylulose 5-phosphate: step 6/6. Its function is as follows. Catalyzes the conversion of 1-hydroxy-2-methyl-2-(E)-butenyl 4-diphosphate (HMBPP) into a mixture of isopentenyl diphosphate (IPP) and dimethylallyl diphosphate (DMAPP). Acts in the terminal step of the DOXP/MEP pathway for isoprenoid precursor biosynthesis. This is 4-hydroxy-3-methylbut-2-enyl diphosphate reductase from Thermoanaerobacter pseudethanolicus (strain ATCC 33223 / 39E) (Clostridium thermohydrosulfuricum).